The chain runs to 268 residues: NAC domain-containing protein 41 (268 aa).

Residues 15-160 (LPPGFRFHPT…NWVLCRVFLK (146 aa)) enclose the NAC domain. Residues 109-166 (VGMKKTLVFYKGKPPNGTRTNWVLHEYRLVDSQQDSLYGQNMNWVLCRVFLKKRSNSN) mediate DNA binding. The interval 166–190 (NSKRKEDEKEEVENEKETETERERE) is disordered. The segment covering 180–190 (EKETETERERE) has biased composition (basic and acidic residues).

It localises to the nucleus. Functionally, transcription activator of the mannan synthase CSLA9. Recognizes and binds to DNA-specific sequence of CSLA9 promoter. This chain is NAC domain-containing protein 41, found in Arabidopsis thaliana (Mouse-ear cress).